Consider the following 211-residue polypeptide: Thymidylate kinase (211 aa).

7 to 14 (GIDGCGKT) serves as a coordination point for ATP.

The protein belongs to the thymidylate kinase family.

The catalysed reaction is dTMP + ATP = dTDP + ADP. Phosphorylation of dTMP to form dTDP in both de novo and salvage pathways of dTTP synthesis. The polypeptide is Thymidylate kinase (Anaplasma marginale (strain St. Maries)).